The following is a 347-amino-acid chain: tRNA pseudouridine synthase D (347 aa).

The Nucleophile role is filled by aspartate 81. The TRUD domain maps to 158 to 305 (GVPNYFGSQR…RHDRRDIALK (148 aa)).

This sequence belongs to the pseudouridine synthase TruD family.

It carries out the reaction uridine(13) in tRNA = pseudouridine(13) in tRNA. Its function is as follows. Responsible for synthesis of pseudouridine from uracil-13 in transfer RNAs. In Vibrio campbellii (strain ATCC BAA-1116), this protein is tRNA pseudouridine synthase D.